Consider the following 36-residue polypeptide: Neurotoxin PRTx26An0C3 (36 aa).

Cystine bridges form between Cys3-Cys17, Cys10-Cys22, and Cys16-Cys34.

Expressed by the venom gland.

It localises to the secreted. In terms of biological role, neurotoxin. Causes spastic paralysis and death in mice. Moderate inhibitor of L-type calcium channels (Cav1/CACNA1). In Phoneutria nigriventer (Brazilian armed spider), this protein is Neurotoxin PRTx26An0C3.